The following is a 966-amino-acid chain: Protein STICHEL-like 4 (966 aa).

2 disordered regions span residues 64–118 (RSLR…DRSS) and 200–237 (RDNA…REQN). The span at 75-84 (LKEDHQDSRE) shows a compositional bias: basic and acidic residues. The span at 98–108 (PIVSFGTSKVT) shows a compositional bias: polar residues. Basic and acidic residues predominate over residues 109 to 118 (PSDEKFDRSS). Over residues 208 to 217 (SEMSIASNSV) the composition is skewed to polar residues. A compositionally biased stretch (basic and acidic residues) spans 219–236 (RGEKYEGEEGGGGRDREQ). Position 384 to 391 (384 to 391 (GPNGTGKT)) interacts with ATP. Residues Cys-403, Cys-412, Cys-415, and Cys-418 each coordinate Zn(2+). Residues 650–678 (SKEDMEKLKQALKTLSESEKQLRVSNDKL) are a coiled coil. Residues 706–717 (FNHTPLTDSDPS) are compositionally biased toward polar residues. Positions 706 to 733 (FNHTPLTDSDPSNHVVAGTRRDDSKQGF) are disordered.

It belongs to the DnaX/STICHEL family.

This chain is Protein STICHEL-like 4, found in Arabidopsis thaliana (Mouse-ear cress).